The sequence spans 206 residues: Xanthine phosphoribosyltransferase (206 aa).

Residues leucine 28 and asparagine 35 each coordinate xanthine. 136-140 (ANGQA) provides a ligand contact to 5-phospho-alpha-D-ribose 1-diphosphate. Lysine 164 lines the xanthine pocket.

It belongs to the purine/pyrimidine phosphoribosyltransferase family. Xpt subfamily. Homodimer.

The protein resides in the cytoplasm. The catalysed reaction is XMP + diphosphate = xanthine + 5-phospho-alpha-D-ribose 1-diphosphate. It participates in purine metabolism; XMP biosynthesis via salvage pathway; XMP from xanthine: step 1/1. In terms of biological role, converts the preformed base xanthine, a product of nucleic acid breakdown, to xanthosine 5'-monophosphate (XMP), so it can be reused for RNA or DNA synthesis. The sequence is that of Xanthine phosphoribosyltransferase from Oenococcus oeni (strain ATCC BAA-331 / PSU-1).